A 500-amino-acid polypeptide reads, in one-letter code: MFHIIDLALKWDERRVKIVDELKSKGINPYPHKYDITHTIIDIKKMERSDKPTDAFAFDISTAGRVANIRRHGKISFVDIFDEGERLQLQLRVNELGDRYDKFFEIVDRGDILGVKGDLLYTIKGELTLRIKDYVLLSKSLIEPPDWSKLSPEFRYAHRYVDFLYNDLARRNMEIRYSTIRRIREFLYSKGFMEVETPILQPVYGGALAKPFMSHVNYLNENWYLRISLELYLKRYIVGGFNKVFEIGKVFRNEDIDVTHNPEFTLLELYWAYADYNDIMRLTEEMLQDVVKNINNDSKIKYSIGGKEYTIEFSQFRKITMIDSLTEVLGKDVDKMSDEELKSLMDKNGLKPRGNMYIRGLMIEKLFDKLVTPTLIQPTFVLDYPVETTPLCKPHRSKQGLVERFELYVAGMELANAYTELNDPIIQDMLFKQEQEMFKRGDEEAHPYDVDFVRALSYGMPPTGGLGIGIDRLIMLLTNNMSIKEIIPYPMLSAKVIQED.

The Mg(2+) site is built by glutamate 406 and glutamate 413.

This sequence belongs to the class-II aminoacyl-tRNA synthetase family. Homodimer. The cofactor is Mg(2+).

Its subcellular location is the cytoplasm. The enzyme catalyses tRNA(Lys) + L-lysine + ATP = L-lysyl-tRNA(Lys) + AMP + diphosphate. This is Lysine--tRNA ligase from Sulfolobus acidocaldarius (strain ATCC 33909 / DSM 639 / JCM 8929 / NBRC 15157 / NCIMB 11770).